The chain runs to 854 residues: Transcription factor asR3 (854 aa).

The segment at residues 19–45 is a DNA-binding region (zn(2)-C6 fungal-type); it reads CWECRRRKIKCDRNDPCAHCIRHETQC. The tract at residues 56-156 is disordered; it reads TDSDVSRTRP…SLSTNTSPSA (101 aa). Polar residues-rich tracts occupy residues 78 to 90 and 125 to 145; these read ASGS…TRPS and LNPS…SSRG. A compositionally biased stretch (low complexity) spans 146 to 156; it reads PSLSTNTSPSA.

The protein resides in the nucleus. In terms of biological role, transcription factor; part of the gene cluster that mediates the biosynthesis of xenovulene A, an unusual meroterpenoid that has potent inhibitory effects on the human gamma-aminobutyrate A (GABAA) benzodiazepine receptor. The chain is Transcription factor asR3 from Sarocladium schorii (Acremonium strictum (strain IMI 501407)).